Consider the following 282-residue polypeptide: Digeranylgeranylglyceryl phosphate synthase (282 aa).

A run of 9 helical transmembrane segments spans residues 15-35 (VIGA…WYLE), 36-56 (LKGI…GYVI), 81-100 (VNKA…ALSI), 104-121 (IYAL…IYYA), 131-151 (GNLL…LAFF), 159-179 (IIIP…VKGI), 201-221 (KSWR…PLPF), 222-242 (FIGF…PFTI), and 260-280 (YLKI…LPFF).

Belongs to the UbiA prenyltransferase family. DGGGP synthase subfamily. Mg(2+) is required as a cofactor. The cofactor is Ca(2+).

Its subcellular location is the cell membrane. It catalyses the reaction sn-3-O-(geranylgeranyl)glycerol 1-phosphate + (2E,6E,10E)-geranylgeranyl diphosphate = 2,3-bis-O-(geranylgeranyl)-sn-glycerol 1-phosphate + diphosphate. Its pathway is membrane lipid metabolism; glycerophospholipid metabolism. Its activity is regulated as follows. Inhibited by EDTA in vitro. Its function is as follows. Prenyltransferase that catalyzes the transfer of the geranylgeranyl moiety of geranylgeranyl diphosphate (GGPP) to the C2 hydroxyl of (S)-3-O-geranylgeranylglyceryl phosphate (GGGP). This reaction is the second ether-bond-formation step in the biosynthesis of archaeal membrane lipids. Cannot use other prenyl donors, i.e. farnesyl diphosphate (FPP) and phytyl diphosphate. Moreover, 4-hydroxybenzoate, 1,4-dihydroxy 2-naphthoate, homogentisate, and alpha-glycerophosphate do not function as prenyl acceptor substrates. The chain is Digeranylgeranylglyceryl phosphate synthase (ubiA-2) from Saccharolobus solfataricus (strain ATCC 35092 / DSM 1617 / JCM 11322 / P2) (Sulfolobus solfataricus).